We begin with the raw amino-acid sequence, 88 residues long: Acylphosphatase (88 aa).

Residues 3–88 (RLVALVKGRV…EAGLKGFHVY (86 aa)) enclose the Acylphosphatase-like domain. Catalysis depends on residues Arg-18 and Asn-36.

It belongs to the acylphosphatase family.

The enzyme catalyses an acyl phosphate + H2O = a carboxylate + phosphate + H(+). This is Acylphosphatase (acyP) from Thermus thermophilus (strain ATCC BAA-163 / DSM 7039 / HB27).